A 282-amino-acid polypeptide reads, in one-letter code: D-alanine aminotransferase (282 aa).

Y32 contacts substrate. Residue R51 participates in pyridoxal 5'-phosphate binding. 2 residues coordinate substrate: R99 and H101. K146 functions as the Proton acceptor in the catalytic mechanism. At K146 the chain carries N6-(pyridoxal phosphate)lysine. E178 contacts pyridoxal 5'-phosphate.

It belongs to the class-IV pyridoxal-phosphate-dependent aminotransferase family. Homodimer. The cofactor is pyridoxal 5'-phosphate.

It catalyses the reaction D-alanine + 2-oxoglutarate = D-glutamate + pyruvate. In terms of biological role, acts on the D-isomers of alanine, leucine, aspartate, glutamate, aminobutyrate, norvaline and asparagine. The enzyme transfers an amino group from a substrate D-amino acid to the pyridoxal phosphate cofactor to form pyridoxamine and an alpha-keto acid in the first half-reaction. The second half-reaction is the reverse of the first, transferring the amino group from the pyridoxamine to a second alpha-keto acid to form the product D-amino acid via a ping-pong mechanism. This is an important process in the formation of D-alanine and D-glutamate, which are essential bacterial cell wall components. The sequence is that of D-alanine aminotransferase (dat) from Staphylococcus aureus (strain MW2).